We begin with the raw amino-acid sequence, 252 residues long: Imidazole glycerol phosphate synthase subunit HisF (252 aa).

Catalysis depends on residues Asp11 and Asp130.

Belongs to the HisA/HisF family. In terms of assembly, heterodimer of HisH and HisF.

It localises to the cytoplasm. The enzyme catalyses 5-[(5-phospho-1-deoxy-D-ribulos-1-ylimino)methylamino]-1-(5-phospho-beta-D-ribosyl)imidazole-4-carboxamide + L-glutamine = D-erythro-1-(imidazol-4-yl)glycerol 3-phosphate + 5-amino-1-(5-phospho-beta-D-ribosyl)imidazole-4-carboxamide + L-glutamate + H(+). Its pathway is amino-acid biosynthesis; L-histidine biosynthesis; L-histidine from 5-phospho-alpha-D-ribose 1-diphosphate: step 5/9. In terms of biological role, IGPS catalyzes the conversion of PRFAR and glutamine to IGP, AICAR and glutamate. The HisF subunit catalyzes the cyclization activity that produces IGP and AICAR from PRFAR using the ammonia provided by the HisH subunit. In Staphylococcus saprophyticus subsp. saprophyticus (strain ATCC 15305 / DSM 20229 / NCIMB 8711 / NCTC 7292 / S-41), this protein is Imidazole glycerol phosphate synthase subunit HisF.